A 461-amino-acid polypeptide reads, in one-letter code: Autophagy-related protein 6 (461 aa).

Residues 75–88 (EEHGTDSSPDHDSS) show a composition bias toward basic and acidic residues. Disordered regions lie at residues 75–94 (EEHGTDSSPDHDSSPDASLV) and 101–124 (EEPVPVSAPSPESSEADGPNPISG). Residues 103 to 113 (PVPVSAPSPES) are compositionally biased toward low complexity. Positions 194–286 (TKLRDSIQEC…VLNRLDHLRN (93 aa)) form a coiled coil.

The protein belongs to the beclin family.

Required for cytoplasm to vacuole transport (Cvt) and autophagy. Also involved in endosome-to-Golgi retrograde transport. The chain is Autophagy-related protein 6 (ATG6) from Meyerozyma guilliermondii (strain ATCC 6260 / CBS 566 / DSM 6381 / JCM 1539 / NBRC 10279 / NRRL Y-324) (Yeast).